Consider the following 245-residue polypeptide: METSQGWLVACVLTMTLVWTVAEDVCRAPNGKDGAPGNPGRPGRPGLKGERGEPGAAGIRTGIRGFKGDPGESGPPGKPGNVGLPGPSGPLGDSGPQGLKGVKGNPGNIRDQPRPAFSAIRQNPMTLGNVVIFDKVLTNQESPYQNHTGRFICAVPGFYYFNFQVISKWDLCLFIKSSSGGQPRDSLSFSNTNNKGLFQVLAGGTVLQLRRGDEVWIEKDPAKGRIYQGTEADSIFSGFLIFPSA.

Positions 1–22 are cleaved as a signal peptide; sequence METSQGWLVACVLTMTLVWTVA. The tract at residues 28–114 is disordered; it reads APNGKDGAPG…NPGNIRDQPR (87 aa). In terms of domain architecture, Collagen-like spans 31–109; the sequence is GKDGAPGNPG…KGVKGNPGNI (79 aa). 4-hydroxyproline is present on residues P39 and P45. A 5-hydroxylysine modification is found at K48. Residue K48 is glycosylated (O-linked (Gal...) hydroxylysine; alternate). Residue P54 is modified to 4-hydroxyproline. K67 bears the 5-hydroxylysine mark. Residue K67 is glycosylated (O-linked (Gal...) hydroxylysine; alternate). 2 positions are modified to 4-hydroxyproline: P79 and P85. Residues 79–99 are compositionally biased toward low complexity; that stretch reads PGNVGLPGPSGPLGDSGPQGL. K100 carries the 5-hydroxylysine modification. K100 carries an O-linked (Gal...) hydroxylysine; alternate glycan. The region spanning 110–245 is the C1q domain; it reads RDQPRPAFSA…FSGFLIFPSA (136 aa). N-linked (GlcNAc...) asparagine glycosylation occurs at N146. Ca(2+) is bound at residue Q199.

As to quaternary structure, core component of the complement C1 complex, a calcium-dependent complex composed of 1 molecule of the C1Q subcomplex, 2 molecules of C1R and 2 molecules of C1S. The C1Q subcomplex is composed 18 subunits: 3 chains of C1QA, C1QB, and C1QC trimerize to form 6 collagen-like triple helices connected to six globular ligand-recognition modules (C1q domain). Interacts with CR1 (via Sushi 24 and Sushi 25 domains). Interacts (via C-terminus) with CD33; this interaction activates CD33 inhibitory motifs. O-linked glycans are assumed to be the Glc-Gal disaccharides typically found as secondary modifications of hydroxylated lysines in collagen-like domains.

It is found in the secreted. It localises to the cell surface. Its activity is regulated as follows. The C1Q subcomplex is inhibited by sulfated molecules, such as triterpenoid sulfates, heparan sulfate, or chondroitin sulfates. Its function is as follows. Core component of the complement C1 complex, a multiprotein complex that initiates the classical pathway of the complement system, a cascade of proteins that leads to phagocytosis and breakdown of pathogens and signaling that strengthens the adaptive immune system. The classical complement pathway is initiated by the C1Q subcomplex of the C1 complex, which specifically binds IgG or IgM immunoglobulins complexed with antigens, forming antigen-antibody complexes on the surface of pathogens: C1QA, together with C1QB and C1QC, specifically recognizes and binds the Fc regions of IgG or IgM via its C1q domain. Immunoglobulin-binding activates the proenzyme C1R, which cleaves C1S, initiating the proteolytic cascade of the complement system. The C1Q subcomplex is activated by a hexamer of IgG complexed with antigens, while it is activated by a pentameric IgM. The C1Q subcomplex also recognizes and binds phosphatidylserine exposed on the surface of cells undergoing programmed cell death, possibly promoting activation of the complement system. In Mus musculus (Mouse), this protein is Complement C1q subcomponent subunit A.